Consider the following 504-residue polypeptide: Sperm motility kinase 2A (504 aa).

Positions 28–276 (YEMLGTIGHG…VAEVMMHPWV (249 aa)) constitute a Protein kinase domain. ATP-binding positions include 34-42 (IGHGGSTKV) and Lys57. Asp147 acts as the Proton acceptor in catalysis. In terms of domain architecture, UBA spans 294–334 (KPDPAIVKAMGHIGFQAQDIEDSLRQRKFNETMASYCLLKK). Polar residues-rich tracts occupy residues 376–393 (PTSL…CGRS) and 443–454 (SDESTEGHTSAS). Disordered regions lie at residues 376 to 403 (PTSL…RSFS) and 443 to 469 (SDES…PRGI).

It belongs to the protein kinase superfamily. CAMK Ser/Thr protein kinase family. Smok subfamily. Testis-specific. Expressed in the testis from 22 days postpartum (22 dpp).

The enzyme catalyses L-seryl-[protein] + ATP = O-phospho-L-seryl-[protein] + ADP + H(+). It carries out the reaction L-threonyl-[protein] + ATP = O-phospho-L-threonyl-[protein] + ADP + H(+). May play a role in sperm motility, especially in the regulation of flagellar function. The chain is Sperm motility kinase 2A (Smok2a) from Mus musculus (Mouse).